Consider the following 368-residue polypeptide: Aminomethyltransferase (368 aa).

The protein belongs to the GcvT family. In terms of assembly, the glycine cleavage system is composed of four proteins: P, T, L and H.

It carries out the reaction N(6)-[(R)-S(8)-aminomethyldihydrolipoyl]-L-lysyl-[protein] + (6S)-5,6,7,8-tetrahydrofolate = N(6)-[(R)-dihydrolipoyl]-L-lysyl-[protein] + (6R)-5,10-methylene-5,6,7,8-tetrahydrofolate + NH4(+). The glycine cleavage system catalyzes the degradation of glycine. The sequence is that of Aminomethyltransferase from Thermoanaerobacter sp. (strain X514).